Consider the following 252-residue polypeptide: Trans-aconitate 2-methyltransferase (252 aa).

It belongs to the methyltransferase superfamily. Tam family.

Its subcellular location is the cytoplasm. It catalyses the reaction trans-aconitate + S-adenosyl-L-methionine = (E)-3-(methoxycarbonyl)pent-2-enedioate + S-adenosyl-L-homocysteine. Its function is as follows. Catalyzes the S-adenosylmethionine monomethyl esterification of trans-aconitate. The chain is Trans-aconitate 2-methyltransferase from Escherichia coli O17:K52:H18 (strain UMN026 / ExPEC).